We begin with the raw amino-acid sequence, 491 residues long: Putative pentatricopeptide repeat-containing protein At1g02420 (491 aa).

PPR repeat units lie at residues 179-209 (DTACFNALLRTLCQEKSMTDARNVYHSLKHQ), 210-244 (FQPDLQTFNILLSGWKSSEEAEAFFEEMKGKGLKP), 245-279 (DVVTYNSLIDVYCKDREIEKAYKLIDKMREEEETP), 280-314 (DVITYTTVIGGLGLIGQPDKAREVLKEMKEYGCYP), 315-349 (DVAAYNAAIRNFCIARRLGDADKLVDEMVKKGLSP), 350-384 (NATTYNLFFRVLSLANDLGRSWELYVRMLGNECLP), 385-419 (NTQSCMFLIKMFKRHEKVDMAMRLWEDMVVKGFGS), and 420-454 (YSLVSDVLLDLLCDLAKVEEAEKCLLEMVEKGHRP).

The protein belongs to the PPR family. P subfamily.

This chain is Putative pentatricopeptide repeat-containing protein At1g02420, found in Arabidopsis thaliana (Mouse-ear cress).